Consider the following 404-residue polypeptide: Argininosuccinate synthase (404 aa).

ATP is bound at residue 15–23 (AYSGGLDTS). Tyr-94 serves as a coordination point for L-citrulline. Position 124 (Gly-124) interacts with ATP. Residues Thr-126, Asn-130, and Asp-131 each contribute to the L-aspartate site. Asn-130 provides a ligand contact to L-citrulline. L-citrulline is bound by residues Arg-134, Ser-182, Glu-266, and Tyr-278.

The protein belongs to the argininosuccinate synthase family. Type 1 subfamily. In terms of assembly, homotetramer.

It is found in the cytoplasm. The enzyme catalyses L-citrulline + L-aspartate + ATP = 2-(N(omega)-L-arginino)succinate + AMP + diphosphate + H(+). It participates in amino-acid biosynthesis; L-arginine biosynthesis; L-arginine from L-ornithine and carbamoyl phosphate: step 2/3. This Streptomyces avermitilis (strain ATCC 31267 / DSM 46492 / JCM 5070 / NBRC 14893 / NCIMB 12804 / NRRL 8165 / MA-4680) protein is Argininosuccinate synthase.